The following is a 316-amino-acid chain: GMP reductase (316 aa).

The active-site Thioimidate intermediate is the Cys175. 202–225 (VIADGGIVEHGDIAKALVCGATMV) contacts NADP(+).

The protein belongs to the IMPDH/GMPR family. GuaC type 2 subfamily.

It carries out the reaction IMP + NH4(+) + NADP(+) = GMP + NADPH + 2 H(+). Its function is as follows. Catalyzes the irreversible NADPH-dependent deamination of GMP to IMP. It functions in the conversion of nucleobase, nucleoside and nucleotide derivatives of G to A nucleotides, and in maintaining the intracellular balance of A and G nucleotides. In Chromobacterium violaceum (strain ATCC 12472 / DSM 30191 / JCM 1249 / CCUG 213 / NBRC 12614 / NCIMB 9131 / NCTC 9757 / MK), this protein is GMP reductase.